The following is a 246-amino-acid chain: Pyrroloquinoline-quinone synthase (246 aa).

This sequence belongs to the PqqC family.

The catalysed reaction is 6-(2-amino-2-carboxyethyl)-7,8-dioxo-1,2,3,4,7,8-hexahydroquinoline-2,4-dicarboxylate + 3 O2 = pyrroloquinoline quinone + 2 H2O2 + 2 H2O + H(+). It participates in cofactor biosynthesis; pyrroloquinoline quinone biosynthesis. Its function is as follows. Ring cyclization and eight-electron oxidation of 3a-(2-amino-2-carboxyethyl)-4,5-dioxo-4,5,6,7,8,9-hexahydroquinoline-7,9-dicarboxylic-acid to PQQ. The polypeptide is Pyrroloquinoline-quinone synthase (Acidiphilium cryptum (strain JF-5)).